Here is a 279-residue protein sequence, read N- to C-terminus: Protease HtpX homolog (279 aa).

Helical transmembrane passes span 6–26 (TVAL…MMGG) and 28–48 (GGAL…YWFS). His-127 provides a ligand contact to Zn(2+). The active site involves Glu-128. Residue His-131 coordinates Zn(2+). 2 consecutive transmembrane segments (helical) span residues 137-157 (ILIG…AHMA) and 177-197 (LGLL…QMAI). Glu-202 lines the Zn(2+) pocket.

This sequence belongs to the peptidase M48B family. Requires Zn(2+) as cofactor.

It is found in the cell inner membrane. This is Protease HtpX homolog from Syntrophotalea carbinolica (strain DSM 2380 / NBRC 103641 / GraBd1) (Pelobacter carbinolicus).